Consider the following 405-residue polypeptide: Phosphoglycerate kinase (405 aa).

Substrate is bound by residues 24–26 (DFN), Arg40, 63–66 (HLGR), Arg122, and Arg162. Residues Lys212, Glu331, and 361–364 (GGDS) contribute to the ATP site.

Belongs to the phosphoglycerate kinase family. As to quaternary structure, monomer.

It is found in the cytoplasm. It catalyses the reaction (2R)-3-phosphoglycerate + ATP = (2R)-3-phospho-glyceroyl phosphate + ADP. It participates in carbohydrate degradation; glycolysis; pyruvate from D-glyceraldehyde 3-phosphate: step 2/5. This is Phosphoglycerate kinase from Corynebacterium glutamicum (strain R).